The chain runs to 456 residues: Asparagine--tRNA ligase (456 aa).

This sequence belongs to the class-II aminoacyl-tRNA synthetase family. In terms of assembly, homodimer.

The protein localises to the cytoplasm. It carries out the reaction tRNA(Asn) + L-asparagine + ATP = L-asparaginyl-tRNA(Asn) + AMP + diphosphate + H(+). The protein is Asparagine--tRNA ligase of Mycoplasma genitalium (strain ATCC 33530 / DSM 19775 / NCTC 10195 / G37) (Mycoplasmoides genitalium).